Here is a 339-residue protein sequence, read N- to C-terminus: Phenylalanine--tRNA ligase alpha subunit (339 aa).

Glutamate 254 provides a ligand contact to Mg(2+).

Belongs to the class-II aminoacyl-tRNA synthetase family. Phe-tRNA synthetase alpha subunit type 1 subfamily. Tetramer of two alpha and two beta subunits. Mg(2+) is required as a cofactor.

The protein resides in the cytoplasm. The catalysed reaction is tRNA(Phe) + L-phenylalanine + ATP = L-phenylalanyl-tRNA(Phe) + AMP + diphosphate + H(+). The protein is Phenylalanine--tRNA ligase alpha subunit of Clostridium novyi (strain NT).